The chain runs to 509 residues: FAD-linked oxidoreductase anuG (509 aa).

Residues 1–21 (MVQISNVWGFGLAIMASLAAA) form the signal peptide. In terms of domain architecture, FAD-binding PCMH-type spans 75–246 (YAAPKFTVVV…TSFEMSIYPT (172 aa)).

This sequence belongs to the oxygen-dependent FAD-linked oxidoreductase family. FAD is required as a cofactor.

The enzyme catalyses (2S,9S)-annullatin H + 2 A = (2S,9S)-annullatin D + 2 AH2. It functions in the pathway secondary metabolite biosynthesis. Its function is as follows. Cytochrome P450 monooxygenase; part of the gene cluster that mediates the biosynthesis of annullatin D, an alkylated aromatic polyketide with a fused dihydrobenzofuran lactone ring system that exhibits potent agonistic activities toward the cannabinoid receptors. Within the pathway, anuG is responsible for the five-member lactone ring formation in (2S, 9S)-annullatin D via oxidative lactonization between the two hydroxyl groups. The annullatin backbone 2-hydroxymethyl-3-pentylphenol is assembled from one acetyl-CoA starter unit and 5 malonyl-CoA elongation units by cooperation of the highly reducing polyketide synthase anuA, the short-chain dehydrogenase anuB and the oxidoreductase anuC, before being hydroxylated at the C-5 alkyl chain by the cytochrome P450 monooxygenase anuE to form (8S)-annullatin E. The prenyltransferase anuH subsequently installs one isoprenyl group at the benzene ring to form (8S)-annullatin J. Enzymatic or nonenzymatic dihydro-benzofuran ring formation between the prenyl and the phenolic hydroxyl groups in (8S)-annullatin J results in two diastereomers (2S,9S)-annullatin H and compound 12. The intermediate (2S,9S)-annullatin H is then converted to (2S,9S)-annullatin D by the FAD-linked oxidoreductase anuG-catalyzed five-member lactone ring formation. The isomer 12 acts as a substrate for the short-chain dehydrogenase anuF and is oxidized to (2R)-annullatin F, which is subsequently acetylated by an acetyltransferase leading to (2R)-annullatin G formation. The remaining enzymes identified within the cluster, anuD, anuI and anuJ, seem not to be involved in annullatin biosynthesis. The protein is FAD-linked oxidoreductase anuG of Penicillium roqueforti (strain FM164).